Consider the following 509-residue polypeptide: Maturase K (509 aa).

It belongs to the intron maturase 2 family. MatK subfamily.

The protein localises to the plastid. It localises to the chloroplast. In terms of biological role, usually encoded in the trnK tRNA gene intron. Probably assists in splicing its own and other chloroplast group II introns. This is Maturase K from Metasequoia glyptostroboides (Dawn redwood).